The primary structure comprises 665 residues: Alpha-1,4-glucan:maltose-1-phosphate maltosyltransferase (665 aa).

Alpha-maltose 1-phosphate-binding residues include lysine 255, glutamine 315, and aspartate 350. Aspartate 386 acts as the Nucleophile in catalysis. Position 387 (asparagine 387) interacts with alpha-maltose 1-phosphate. The active-site Proton donor is glutamate 415. 526-527 is a binding site for alpha-maltose 1-phosphate; it reads KY.

It belongs to the glycosyl hydrolase 13 family. GlgE subfamily. In terms of assembly, homodimer.

It carries out the reaction alpha-maltose 1-phosphate + [(1-&gt;4)-alpha-D-glucosyl](n) = [(1-&gt;4)-alpha-D-glucosyl](n+2) + phosphate. Functionally, maltosyltransferase that uses maltose 1-phosphate (M1P) as the sugar donor to elongate linear or branched alpha-(1-&gt;4)-glucans. Is involved in a branched alpha-glucan biosynthetic pathway from trehalose, together with TreS, Mak and GlgB. This Myxococcus xanthus (strain DK1622) protein is Alpha-1,4-glucan:maltose-1-phosphate maltosyltransferase.